The sequence spans 520 residues: Putative lipase ATG15 (520 aa).

Residues methionine 1 to proline 14 are Cytoplasmic-facing. The chain crosses the membrane as a helical; Signal-anchor for type II membrane protein span at residues leucine 15–leucine 35. The Lumenal portion of the chain corresponds to proline 36–leucine 520. Residues asparagine 173, asparagine 202, and asparagine 208 are each glycosylated (N-linked (GlcNAc...) asparagine). Serine 332 serves as the catalytic Charge relay system.

Belongs to the AB hydrolase superfamily. Lipase family. As to quaternary structure, binds to both phosphatidylinositol (PI) and phosphatidylinositol 3,5-bisphosphate (PIP2). In terms of processing, glycosylated.

The protein resides in the endosome. It localises to the multivesicular body membrane. It is found in the prevacuolar compartment membrane. It catalyses the reaction a triacylglycerol + H2O = a diacylglycerol + a fatty acid + H(+). Functionally, lipase which is essential for lysis of subvacuolar cytoplasm to vacuole targeted bodies and intravacuolar autophagic bodies. Involved in the lysis of intravacuolar multivesicular body (MVB) vesicles. The intravacuolar membrane disintegration by ATG15 is critical to life span extension. The protein is Putative lipase ATG15 (ATG15) of Saccharomyces cerevisiae (strain ATCC 204508 / S288c) (Baker's yeast).